Consider the following 116-residue polypeptide: CDKN2AIP N-terminal-like protein (116 aa).

M1 is subject to N-acetylmethionine. One can recognise an XRN2-binding (XTBD) domain in the interval 24–116 (AEQFRSYSES…RSELMKKHQS (93 aa)).

Belongs to the CARF family. Interacts with XRN2; the interaction is direct.

The polypeptide is CDKN2AIP N-terminal-like protein (Cdkn2aipnl) (Rattus norvegicus (Rat)).